The sequence spans 201 residues: Potassium-transporting ATPase KdpC subunit (201 aa).

The chain crosses the membrane as a helical span at residues 7–27; that stretch reads PALVLLVALTAITGLAYPLAV.

It belongs to the KdpC family. As to quaternary structure, the system is composed of three essential subunits: KdpA, KdpB and KdpC.

The protein resides in the cell inner membrane. In terms of biological role, part of the high-affinity ATP-driven potassium transport (or Kdp) system, which catalyzes the hydrolysis of ATP coupled with the electrogenic transport of potassium into the cytoplasm. This subunit acts as a catalytic chaperone that increases the ATP-binding affinity of the ATP-hydrolyzing subunit KdpB by the formation of a transient KdpB/KdpC/ATP ternary complex. The polypeptide is Potassium-transporting ATPase KdpC subunit (Methylorubrum extorquens (strain CM4 / NCIMB 13688) (Methylobacterium extorquens)).